Reading from the N-terminus, the 228-residue chain is MGQKVHPIGIRLGITKDWNARWYADSKNYSDFLISDIEIRKELNEKLKHASVSQINIERVANGVRVTIHTARPGVVIGKKGEDIEKLKQALIAKTGMPVNINIEEIKKPELDAKLVAEGIAQQLEKRIQFRRAMKRAVSNAMRLGAQGIKVNVSGRLNGAEIARAEWYREGRVPLHTLRADIDYATFEADTTYGKIGVKVWIFKGEKLEKISMVSDDKKQSKGKKGRK.

A KH type-2 domain is found at 39 to 107 (IRKELNEKLK…PVNINIEEIK (69 aa)).

It belongs to the universal ribosomal protein uS3 family. Part of the 30S ribosomal subunit. Forms a tight complex with proteins S10 and S14.

Binds the lower part of the 30S subunit head. Binds mRNA in the 70S ribosome, positioning it for translation. In Hydrogenovibrio crunogenus (strain DSM 25203 / XCL-2) (Thiomicrospira crunogena), this protein is Small ribosomal subunit protein uS3.